We begin with the raw amino-acid sequence, 303 residues long: GTP cyclohydrolase FolE2 (303 aa).

Belongs to the GTP cyclohydrolase IV family.

The catalysed reaction is GTP + H2O = 7,8-dihydroneopterin 3'-triphosphate + formate + H(+). It functions in the pathway cofactor biosynthesis; 7,8-dihydroneopterin triphosphate biosynthesis; 7,8-dihydroneopterin triphosphate from GTP: step 1/1. Functionally, converts GTP to 7,8-dihydroneopterin triphosphate. This chain is GTP cyclohydrolase FolE2, found in Exiguobacterium sp. (strain ATCC BAA-1283 / AT1b).